The following is a 285-amino-acid chain: MDILLLVKAAIMGIVEGLTEFLPISSTGHLILTASLLNFTGEIVKVFDIAIQTGAMFAVIWEYRVRLRATVAGITHEAVAQRFVRNLLIAFVPAVISGLALGGLIKEHLFHPVPVATAFVVGGLIILWVERRHRALFGDRDLEGGRVARVETIDDMSALDALKVGLVQCAALIPGTSRSGATIIGAMLFGFSRKAATEFSFFLGIPTLMGAGAYSLIKQRDLLSWGDLPVFAVGVVFAFLSALVCIRWLIRYVSTHDFTVFAWYRIAFGGLVLLSAWGGWVDWKD.

Helical transmembrane passes span 3–23 (ILLL…EFLP), 41–61 (GEIV…AVIW), 87–107 (LLIA…LIKE), 109–129 (LFHP…ILWV), 197–217 (TEFS…YSLI), 226–246 (GDLP…LVCI), and 260–280 (VFAW…WGGW).

It belongs to the UppP family.

It is found in the cell inner membrane. It carries out the reaction di-trans,octa-cis-undecaprenyl diphosphate + H2O = di-trans,octa-cis-undecaprenyl phosphate + phosphate + H(+). Its function is as follows. Catalyzes the dephosphorylation of undecaprenyl diphosphate (UPP). Confers resistance to bacitracin. This Methylibium petroleiphilum (strain ATCC BAA-1232 / LMG 22953 / PM1) protein is Undecaprenyl-diphosphatase.